We begin with the raw amino-acid sequence, 141 residues long: Nucleoside diphosphate kinase (141 aa).

Positions 11, 59, 87, 93, 104, and 114 each coordinate ATP. Histidine 117 acts as the Pros-phosphohistidine intermediate in catalysis.

It belongs to the NDK family. Homotetramer. The cofactor is Mg(2+).

Its subcellular location is the cytoplasm. The catalysed reaction is a 2'-deoxyribonucleoside 5'-diphosphate + ATP = a 2'-deoxyribonucleoside 5'-triphosphate + ADP. It catalyses the reaction a ribonucleoside 5'-diphosphate + ATP = a ribonucleoside 5'-triphosphate + ADP. In terms of biological role, major role in the synthesis of nucleoside triphosphates other than ATP. The ATP gamma phosphate is transferred to the NDP beta phosphate via a ping-pong mechanism, using a phosphorylated active-site intermediate. This is Nucleoside diphosphate kinase from Nitrosomonas eutropha (strain DSM 101675 / C91 / Nm57).